We begin with the raw amino-acid sequence, 209 residues long: Protein bli-3 (209 aa).

A compositionally biased stretch (polar residues) spans 1 to 11 (MSGQGFSNADT). Positions 1–24 (MSGQGFSNADTGNKPADPYKQANL) are disordered.

This is Protein bli-3 (bli-3) from Neurospora crassa (strain ATCC 24698 / 74-OR23-1A / CBS 708.71 / DSM 1257 / FGSC 987).